A 148-amino-acid polypeptide reads, in one-letter code: Probable histone H2A.1 (148 aa).

A compositionally biased stretch (basic residues) spans 1-23; the sequence is MDASTKTKKGAGGRKGGPRKKSV. 2 disordered regions span residues 1-28 and 127-148; these read MDAS…RSTR and KNEK…PKKA. The span at 131 to 142 shows a compositional bias: low complexity; it reads AATTTKSPSKAT. 2 short sequence motifs (SPKK motif) span residues 137–140 and 144–147; these read SPSK and SPKK.

The protein belongs to the histone H2A family. The nucleosome is a histone octamer containing two molecules each of H2A, H2B, H3 and H4 assembled in one H3-H4 heterotetramer and two H2A-H2B heterodimers. The octamer wraps approximately 147 bp of DNA.

It is found in the nucleus. The protein resides in the chromosome. Core component of nucleosome. Nucleosomes wrap and compact DNA into chromatin, limiting DNA accessibility to the cellular machineries which require DNA as a template. Histones thereby play a central role in transcription regulation, DNA repair, DNA replication and chromosomal stability. DNA accessibility is regulated via a complex set of post-translational modifications of histones, also called histone code, and nucleosome remodeling. The polypeptide is Probable histone H2A.1 (Medicago truncatula (Barrel medic)).